Here is a 160-residue protein sequence, read N- to C-terminus: Cytochrome b6-f complex subunit 4 (160 aa).

Transmembrane regions (helical) follow at residues 36–56 (LLYIFPVVILGTIACTVGLAV), 68–88 (PFATPLEILPEWYFFPVFQIL), 95–115 (FFGVLLMTSVPFGLLTVPFLE), and 131–151 (SVFLIGTVISLWLGFGAVLPI).

The protein belongs to the cytochrome b family. PetD subfamily. The 4 large subunits of the cytochrome b6-f complex are cytochrome b6, subunit IV (17 kDa polypeptide, petD), cytochrome f and the Rieske protein, while the 4 small subunits are petG, petL, petM and petN. The complex functions as a dimer.

It is found in the plastid. The protein localises to the chloroplast thylakoid membrane. Functionally, component of the cytochrome b6-f complex, which mediates electron transfer between photosystem II (PSII) and photosystem I (PSI), cyclic electron flow around PSI, and state transitions. In Welwitschia mirabilis (Tree tumbo), this protein is Cytochrome b6-f complex subunit 4.